Here is a 915-residue protein sequence, read N- to C-terminus: DNA (cytosine-5)-methyltransferase 2 (915 aa).

Positions 1-14 (MAPSSPSSARPTRA) are enriched in low complexity. Residues 1 to 171 (MAPSSPSSAR…STAANKPEED (171 aa)) are disordered. Basic and acidic residues predominate over residues 15–30 (SGRERSAMAEEIHQNQ). Residues 42-57 (AKRRRKAASSGKKPKP) are compositionally biased toward basic residues. Residues 71–80 (KKGETEKTEP) are compositionally biased toward basic and acidic residues. The segment covering 81–108 (VVDDVCAEEPDEEELAMGEEEAEAEEQA) has biased composition (acidic residues). Over residues 109–119 (MQEVVAAVAAG) the composition is skewed to low complexity. The BAH domain occupies 188 to 313 (IVYCLGDDVY…VAYSTFANIS (126 aa)). Positions 315 to 328 (ENGQSGSETASGIS) are enriched in polar residues. The tract at residues 315 to 338 (ENGQSGSETASGISSDDAGLETSS) is disordered. One can recognise an SAM-dependent MTase C5-type domain in the interval 345–876 (ATLLDLYSGC…YCLGQAYLGE (532 aa)). The Chromo domain maps to 445–508 (FVVQKLIGIR…EGRKRKILPL (64 aa)). C521 is an active-site residue.

The protein belongs to the class I-like SAM-binding methyltransferase superfamily. C5-methyltransferase family.

It localises to the nucleus. The enzyme catalyses a 2'-deoxycytidine in DNA + S-adenosyl-L-methionine = a 5-methyl-2'-deoxycytidine in DNA + S-adenosyl-L-homocysteine + H(+). In terms of biological role, may be involved in the CpXpG methylation and in gene silencing. The chain is DNA (cytosine-5)-methyltransferase 2 (ZMET5) from Zea mays (Maize).